Reading from the N-terminus, the 336-residue chain is N-acetyl-gamma-glutamyl-phosphate reductase (336 aa).

Cysteine 156 is a catalytic residue.

The protein belongs to the NAGSA dehydrogenase family. Type 1 subfamily.

The protein localises to the cytoplasm. The catalysed reaction is N-acetyl-L-glutamate 5-semialdehyde + phosphate + NADP(+) = N-acetyl-L-glutamyl 5-phosphate + NADPH + H(+). The protein operates within amino-acid biosynthesis; L-arginine biosynthesis; N(2)-acetyl-L-ornithine from L-glutamate: step 3/4. Its function is as follows. Catalyzes the NADPH-dependent reduction of N-acetyl-5-glutamyl phosphate to yield N-acetyl-L-glutamate 5-semialdehyde. In Moritella profunda, this protein is N-acetyl-gamma-glutamyl-phosphate reductase.